We begin with the raw amino-acid sequence, 109 residues long: Mannose-specific lectin (109 aa).

The Bulb-type lectin domain maps to 1–109; that stretch reads DNILYSSEVL…PPIWATGTGR (109 aa). Cys29 and Cys52 form a disulfide bridge. Positions 79-82 are excised as a propeptide; it reads TGTN.

In terms of assembly, homotrimer or homotetramer.

It is found in the secreted. Functionally, mannose-specific lectin. Shows agglutinating activity toward rabbit erythrocytes and mitogenic activity towards mouse lymphocytes. This is Mannose-specific lectin from Aloe arborescens (Kidachi aloe).